The following is a 125-amino-acid chain: Succinate dehydrogenase assembly factor 3, mitochondrial (125 aa).

The transit peptide at 1-30 (MTGRHVSRVRSLYRRILQLHRALPPDLKAL) directs the protein to the mitochondrion.

This sequence belongs to the complex I LYR family. SDHAF3 subfamily. In terms of assembly, interacts with Sdhb within an Sdha-Sdhb subcomplex.

It localises to the mitochondrion matrix. In terms of biological role, plays an essential role in the assembly of succinate dehydrogenase (SDH), an enzyme complex (also referred to as respiratory complex II) that is a component of both the tricarboxylic acid (TCA) cycle and the mitochondrial electron transport chain, and which couples the oxidation of succinate to fumarate with the reduction of ubiquinone (coenzyme Q) to ubiquinol. Promotes maturation of the iron-sulfur protein subunit Sdhb of the SDH catalytic dimer, protecting it from the deleterious effects of oxidants. May act together with SDHAF1. In Rattus norvegicus (Rat), this protein is Succinate dehydrogenase assembly factor 3, mitochondrial.